Consider the following 309-residue polypeptide: Ribonuclease Z (309 aa).

Residues His-63, His-65, Asp-67, His-68, His-145, Asp-216, and His-274 each contribute to the Zn(2+) site. Asp-67 serves as the catalytic Proton acceptor.

The protein belongs to the RNase Z family. In terms of assembly, homodimer. The cofactor is Zn(2+).

The catalysed reaction is Endonucleolytic cleavage of RNA, removing extra 3' nucleotides from tRNA precursor, generating 3' termini of tRNAs. A 3'-hydroxy group is left at the tRNA terminus and a 5'-phosphoryl group is left at the trailer molecule.. In terms of biological role, zinc phosphodiesterase, which displays some tRNA 3'-processing endonuclease activity. Probably involved in tRNA maturation, by removing a 3'-trailer from precursor tRNA. This Streptococcus sanguinis (strain SK36) protein is Ribonuclease Z.